Here is an 812-residue protein sequence, read N- to C-terminus: MTCSQPNLRVTIIAADGLYKRDVFRFPDPFAVATVGGEQTHTTSVIKKTLNPYWNEMFDLRVNEDSILAIQIFDQKKFKKKDQGFLGVINVRIGDVIDLQMGGDEMLTRDLKKSNDNLVVHGKLIINLSTNLSTPNTNQANGLHRSHMQPSTSSGLVPQVSASTPQPSPGPSQADPTASNPSLHPQRVPSTTRPSSTIVPANGPPAPPNGQQGSRTNLSSFEDSQGRLPAGWERREDNLGRTYYVDHNTRTTTWTRPSNNYNEQTSRTQREASMQLERRAHQSRMLPEDRTGASSPNLQENQQQAQTPPAGGSASAVSMMATGATTAGTGELPPGWEQRTTPEGRPYFVDHNTRTTTWVDPRRQQYIRMYGQNANGTNTTIQQQPVSQLGPLPSGWEMRLTNTARVYFVDHNTKTTTWDDPRLPSSLDQGVPQYKRDFRRKLIYFRSQPALRIMSGQCHVKVRRNNIFEDSYAEIMRQSASDLKKRLMIKFDGEDGLDYGGLSREFFFLLSHEMFNPFYCLFEYSAHDNYTLQINPHSGVNPEHLNYFKFIGRVVGLAIFHRRFLDSFFIGAFYKMMLRKKVSLQDMEGVDEDLHRNLTWTLDNDIEGIIELTFAVDDEKFGERRTIDLKPGGRDIPVTNENKGEYVELVTEWKIVKRVEEQFNAFMSGFNELIPADLVNVFDERELELLIGGIADIDVDDWKKHTDYRGYQESDEVIQNFWKIVRTWDAEQKSRLLQFTTGTSRIPVNGFKDLQGSDGPRRFTIEKSGDPGALPKSHTCFNRLDLPPYKTNDVLEHKLSIAVEETLGFGQE.

The C2 domain occupies 1–109 (MTCSQPNLRV…QMGGDEMLTR (109 aa)). 2 disordered regions span residues 131–235 (NLST…WERR) and 250–350 (RTTT…YFVD). Composition is skewed to polar residues over residues 148–165 (MQPS…ASTP), 174–199 (ADPT…STIV), 214–223 (SRTNLSSFED), and 250–267 (RTTT…QTSR). One can recognise a WW 1 domain in the interval 226 to 259 (GRLPAGWERREDNLGRTYYVDHNTRTTTWTRPSN). A compositionally biased stretch (basic and acidic residues) spans 276–291 (LERRAHQSRMLPEDRT). Residues 292 to 306 (GASSPNLQENQQQAQ) are compositionally biased toward polar residues. Residues 307-330 (TPPAGGSASAVSMMATGATTAGTG) are compositionally biased toward low complexity. WW domains follow at residues 330–363 (GELP…DPRR) and 390–423 (GPLP…DPRL). The HECT domain occupies 479–812 (SASDLKKRLM…VEETLGFGQE (334 aa)). Cysteine 780 serves as the catalytic Glycyl thioester intermediate.

The protein belongs to the RSP5/NEDD4 family. In terms of assembly, interacts with creD.

It localises to the cytoplasm. It catalyses the reaction S-ubiquitinyl-[E2 ubiquitin-conjugating enzyme]-L-cysteine + [acceptor protein]-L-lysine = [E2 ubiquitin-conjugating enzyme]-L-cysteine + N(6)-ubiquitinyl-[acceptor protein]-L-lysine.. It participates in protein modification; protein ubiquitination. E3 ubiquitin-protein ligase which accepts ubiquitin from an E2 ubiquitin-conjugating enzyme in the form of a thioester and then directly transfers the ubiquitin to targeted substrates. Probably involved in the regulatory network controlling carbon source utilization. The sequence is that of Probable E3 ubiquitin-protein ligase hulA (hulA) from Aspergillus flavus (strain ATCC 200026 / FGSC A1120 / IAM 13836 / NRRL 3357 / JCM 12722 / SRRC 167).